The following is a 434-amino-acid chain: Serine hydroxymethyltransferase (434 aa).

Residues L133 and 137 to 139 (GHL) contribute to the (6S)-5,6,7,8-tetrahydrofolate site. K242 carries the post-translational modification N6-(pyridoxal phosphate)lysine.

The protein belongs to the SHMT family. In terms of assembly, homodimer. It depends on pyridoxal 5'-phosphate as a cofactor.

The protein localises to the cytoplasm. It carries out the reaction (6R)-5,10-methylene-5,6,7,8-tetrahydrofolate + glycine + H2O = (6S)-5,6,7,8-tetrahydrofolate + L-serine. It participates in one-carbon metabolism; tetrahydrofolate interconversion. It functions in the pathway amino-acid biosynthesis; glycine biosynthesis; glycine from L-serine: step 1/1. Functionally, catalyzes the reversible interconversion of serine and glycine with tetrahydrofolate (THF) serving as the one-carbon carrier. This reaction serves as the major source of one-carbon groups required for the biosynthesis of purines, thymidylate, methionine, and other important biomolecules. Also exhibits THF-independent aldolase activity toward beta-hydroxyamino acids, producing glycine and aldehydes, via a retro-aldol mechanism. This chain is Serine hydroxymethyltransferase, found in Hyphomicrobium methylovorum.